The primary structure comprises 286 residues: Energy-coupling factor transporter ATP-binding protein EcfA2 (286 aa).

Residues 3-245 (IKIENLTYTY…IDTLEKVGLA (243 aa)) form the ABC transporter domain. ATP is bound at residue 40–47 (GHTGSGKS).

Belongs to the ABC transporter superfamily. Energy-coupling factor EcfA family. In terms of assembly, forms a stable energy-coupling factor (ECF) transporter complex composed of 2 membrane-embedded substrate-binding proteins (S component), 2 ATP-binding proteins (A component) and 2 transmembrane proteins (T component).

Its subcellular location is the cell membrane. Functionally, ATP-binding (A) component of a common energy-coupling factor (ECF) ABC-transporter complex. Unlike classic ABC transporters this ECF transporter provides the energy necessary to transport a number of different substrates. This Clostridium acetobutylicum (strain ATCC 824 / DSM 792 / JCM 1419 / IAM 19013 / LMG 5710 / NBRC 13948 / NRRL B-527 / VKM B-1787 / 2291 / W) protein is Energy-coupling factor transporter ATP-binding protein EcfA2.